A 122-amino-acid polypeptide reads, in one-letter code: Ribosome-binding factor A (122 aa).

It belongs to the RbfA family. As to quaternary structure, monomer. Binds 30S ribosomal subunits, but not 50S ribosomal subunits or 70S ribosomes.

The protein localises to the cytoplasm. In terms of biological role, one of several proteins that assist in the late maturation steps of the functional core of the 30S ribosomal subunit. Associates with free 30S ribosomal subunits (but not with 30S subunits that are part of 70S ribosomes or polysomes). Required for efficient processing of 16S rRNA. May interact with the 5'-terminal helix region of 16S rRNA. This is Ribosome-binding factor A from Opitutus terrae (strain DSM 11246 / JCM 15787 / PB90-1).